The chain runs to 960 residues: Gamma-aminobutyric acid type B receptor subunit 1 (960 aa).

Residues 1–19 (MLLLLLVPLFLRPLGAGGA) form the signal peptide. Residues 20–590 (QTPNATSEGC…KTFRFLSQKL (571 aa)) lie on the Extracellular side of the membrane. 2 N-linked (GlcNAc...) asparagine glycosylation sites follow: N23 and N83. Sushi domains are found at residues 29-95 (CQII…PSRC) and 97-158 (RICS…HCQV). Disulfide bonds link C99–C144, C130–C156, and C219–C245. Positions 246, 269, 286, and 366 each coordinate 4-aminobutanoate. A disulfide bridge connects residues C375 and C409. N408 and N439 each carry an N-linked (GlcNAc...) asparagine glycan. A 4-aminobutanoate-binding site is contributed by E465. N-linked (GlcNAc...) asparagine glycans are attached at residues N481, N501, and N513. A helical membrane pass occupies residues 591 to 611 (FISVSVLSSLGIVLAVVCLSF). The Cytoplasmic portion of the chain corresponds to 612-630 (NIYNSHVRYIQNSQPNLNN). A helical transmembrane segment spans residues 631–651 (LTAVGCSLALAAVFPLGLDGY). The Extracellular portion of the chain corresponds to 652-666 (HIGRSQFPFVCQARL). A helical membrane pass occupies residues 667 to 687 (WLLGLGFSLGYGSMFTKIWWV). Topologically, residues 688–709 (HTVFTKKEEKKEWRKTLEPWKL) are cytoplasmic. The helical transmembrane segment at 710–730 (YATVGLLVGMDVLTLAIWQIV) threads the bilayer. The Extracellular segment spans residues 731 to 767 (DPLHRTIETFAKEEPKEDIDVSILPQLEHCSSKKMNT). A helical transmembrane segment spans residues 768–788 (WLGIFYGYKGLLLLLGIFLAY). Residues 789 to 803 (ETKSVSTEKINDHRA) are Cytoplasmic-facing. A helical membrane pass occupies residues 804-824 (VGMAIYNVAVLCLITAPVTMI). At 825–832 (LSSQQDAA) the chain is on the extracellular side. The chain crosses the membrane as a helical span at residues 833-853 (FAFASLAIVFSSYITLVVLFV). The Cytoplasmic segment spans residues 854–960 (PKMRRLITRG…DGSRVHLLYK (107 aa)). Residues 866 to 879 (QSETQDTMKTGSST) are compositionally biased toward polar residues. Disordered regions lie at residues 866-891 (QSETQDTMKTGSSTNNNEEEKSRLLE) and 908-960 (VSEL…LLYK). Positions 870-924 (QDTMKTGSSTNNNEEEKSRLLEKENRELEKIIAEKEERVSELRHQLQSRQQLRSR) form a coiled coil. Phosphothreonine is present on T872. Positions 887 to 915 (SRLLEKENRELEKIIAEKEERVSELRHQL) are interaction with ATF4. The residue at position 929 (T929) is a Phosphothreonine.

It belongs to the G-protein coupled receptor 3 family. GABA-B receptor subfamily. Heterodimer of GABBR1 and GABBR2. Homodimers may form, but are inactive. Interacts (via C-terminus) with ATF4 (via leucine zipper domain). Interacts with JAKMIP1. As to expression, ubiquitously expressed in tissues including the forebrain, cerebellum, eye, atrium, ventricle, lung, stomach, small intestine, colon, liver, spleen, kidney, urinary bladder and skeletal muscle. Expressed at low levels in testis, and more highly in brain regions. Expression is high the brain regions including cerebral cortical layers, with higher expression in VIb than in the II-V layers, pyramidal CA1-CA3 cell layers and granular cell layers of the hippocampus, granular cell layers of the dentate gyrus, including the caudate, putamen, nucleus accumbens and olfactory tubercle, the granular layer cell layers of the medial habenula, in the cerebellum, predominantly in Purkinje cells, and in the granule cell layer. Also expressed in areas of the brain including the medial geniculate nucleus, substantia nigra, pars compacta, the ventral tegmental area, and in several thalamic, amygdaloid and hypothalamic nuclei, such as the arcuate nucleus of the hypothalamus and mammilary bodies of the hypothalamus. Expressed in the amacrine cell of the retina. Expressed in the brain, spinal cord, stomach, testis, adrenal gland, pituitary, spleen and prostate. In terms of tissue distribution, expressed in the brain, spinal cord, stomach, testis, kidney and liver. As to expression, ubiquitously expressed. Expressed in the forebrain, cerebellum, eye, kidney and urinary bladder. In terms of tissue distribution, ubiquitously expressed with high expression in the pyramidal CA1-CA3 cell layers of the hippocampus, the granule cell layers of the dentate gyrus and olfactory tubercle, the whole cortex, and Purkinje cells of the cerebellum. Moderate expression in the granule cell layer of the cerebellum.

The protein localises to the cell membrane. It is found in the postsynaptic cell membrane. Its subcellular location is the cell projection. The protein resides in the dendrite. It localises to the perikaryon. Its function is as follows. Component of a heterodimeric G-protein coupled receptor for GABA, formed by GABBR1 and GABBR2. Within the heterodimeric GABA receptor, only GABBR1 seems to bind agonists, while GABBR2 mediates coupling to G proteins. Ligand binding causes a conformation change that triggers signaling via guanine nucleotide-binding proteins (G proteins) and modulates the activity of down-stream effectors, such as adenylate cyclase. Signaling inhibits adenylate cyclase, stimulates phospholipase A2, activates potassium channels, inactivates voltage-dependent calcium-channels and modulates inositol phospholipid hydrolysis. Calcium is required for high affinity binding to GABA. Plays a critical role in the fine-tuning of inhibitory synaptic transmission. Pre-synaptic GABA receptor inhibits neurotransmitter release by down-regulating high-voltage activated calcium channels, whereas postsynaptic GABA receptor decreases neuronal excitability by activating a prominent inwardly rectifying potassium (Kir) conductance that underlies the late inhibitory postsynaptic potentials. Not only implicated in synaptic inhibition but also in hippocampal long-term potentiation, slow wave sleep, muscle relaxation and antinociception. The chain is Gamma-aminobutyric acid type B receptor subunit 1 (Gabbr1) from Rattus norvegicus (Rat).